Consider the following 272-residue polypeptide: uncharacterized protein (272 aa).

The signal sequence occupies residues methionine 1 to glycine 22. Cysteine 23 carries the N-palmitoyl cysteine lipid modification. Cysteine 23 carries the S-diacylglycerol cysteine lipid modification.

The protein belongs to the staphylococcal tandem lipoprotein family.

Its subcellular location is the cell membrane. This is an uncharacterized protein from Staphylococcus aureus (strain MRSA252).